The sequence spans 278 residues: Probable septum site-determining protein MinC (278 aa).

The protein belongs to the MinC family. In terms of assembly, interacts with MinD and FtsZ.

Functionally, cell division inhibitor that blocks the formation of polar Z ring septums. Rapidly oscillates between the poles of the cell to destabilize FtsZ filaments that have formed before they mature into polar Z rings. Prevents FtsZ polymerization. In Gloeobacter violaceus (strain ATCC 29082 / PCC 7421), this protein is Probable septum site-determining protein MinC.